Reading from the N-terminus, the 605-residue chain is DNA mismatch repair protein MutL (605 aa).

Belongs to the DNA mismatch repair MutL/HexB family.

In terms of biological role, this protein is involved in the repair of mismatches in DNA. It is required for dam-dependent methyl-directed DNA mismatch repair. May act as a 'molecular matchmaker', a protein that promotes the formation of a stable complex between two or more DNA-binding proteins in an ATP-dependent manner without itself being part of a final effector complex. The protein is DNA mismatch repair protein MutL of Methylocella silvestris (strain DSM 15510 / CIP 108128 / LMG 27833 / NCIMB 13906 / BL2).